A 128-amino-acid chain; its full sequence is MSIRCVVVTPERTELDREADFVALPMFDGELGVQRGRAPMIGRLGYGVLRLQTVSGPERYFVDGGFAQVEDDVVNVLTGRAIPVDLLDNDEATKTLAEALDMPSSTPEQAQIKDAAVRRARGQLRASR.

The segment at 98–128 (EALDMPSSTPEQAQIKDAAVRRARGQLRASR) is disordered. A compositionally biased stretch (basic residues) spans 118–128 (RRARGQLRASR).

Belongs to the ATPase epsilon chain family. In terms of assembly, F-type ATPases have 2 components, CF(1) - the catalytic core - and CF(0) - the membrane proton channel. CF(1) has five subunits: alpha(3), beta(3), gamma(1), delta(1), epsilon(1). CF(0) has three main subunits: a, b and c.

Its subcellular location is the cell inner membrane. Produces ATP from ADP in the presence of a proton gradient across the membrane. The protein is ATP synthase epsilon chain of Rhodopirellula baltica (strain DSM 10527 / NCIMB 13988 / SH1).